An 819-amino-acid chain; its full sequence is Zinc finger protein with KRAB and SCAN domains 5 (819 aa).

An SCAN box domain is found at 51 to 132; it reads QRFKHFQYHE…AVIESIQREL (82 aa). Glycyl lysine isopeptide (Lys-Gly) (interchain with G-Cter in SUMO2) cross-links involve residues K214, K246, and K302. The 72-residue stretch at 216–287 folds into the KRAB domain; sequence EDVADVAVSF…HWVAAERTEK (72 aa). 2 disordered regions span residues 236 to 263 and 283 to 340; these read SQKS…KEGN and ERTE…GERG. The span at 240–249 shows a compositional bias: basic and acidic residues; sequence LGRDSRKEDC. Residues 329 to 340 are compositionally biased toward basic and acidic residues; that stretch reads VNRKQKSNGERG. 9 C2H2-type zinc fingers span residues 341–363, 369–391, 397–419, 425–447, 540–562, 568–590, 596–618, 624–646, and 652–674; these read HRCG…RRIH, FKCG…QRVH, YKCQ…HSVH, YGCN…LKRH, HQCN…RRIH, FRCE…HRVH, YACH…QSVH, FKCN…LRLH, and HQCH…QVLH. K700 is covalently cross-linked (Glycyl lysine isopeptide (Lys-Gly) (interchain with G-Cter in SUMO2)). 3 C2H2-type zinc fingers span residues 708–730, 764–786, and 792–814; these read YQCD…YRTH, HQCN…QRIH, and LQCK…LRSH. K776 participates in a covalent cross-link: Glycyl lysine isopeptide (Lys-Gly) (interchain with G-Cter in SUMO2).

This sequence belongs to the krueppel C2H2-type zinc-finger protein family. Testis specific.

It is found in the nucleus. In terms of biological role, may be involved in transcriptional regulation. The protein is Zinc finger protein with KRAB and SCAN domains 5 (Zkscan5) of Mus musculus (Mouse).